Here is a 410-residue protein sequence, read N- to C-terminus: uncharacterized protein (410 aa).

His-87 provides a ligand contact to Zn(2+). Asp-89 is an active-site residue. Zn(2+) is bound at residue Asp-120. Residue Glu-154 is the Proton acceptor of the active site. Positions 155, 184, and 387 each coordinate Zn(2+).

It belongs to the peptidase M20A family. Zn(2+) serves as cofactor. The cofactor is Co(2+).

This is an uncharacterized protein from Methanocaldococcus jannaschii (strain ATCC 43067 / DSM 2661 / JAL-1 / JCM 10045 / NBRC 100440) (Methanococcus jannaschii).